A 615-amino-acid chain; its full sequence is Proteasome-associated ATPase (615 aa).

The segment at 1–36 (MSESERPEAGDGTDALGASPDTPLSSEDAAELEQLR) is disordered. Residues 25–102 (SSEDAAELEQ…LREEVDRLGQ (78 aa)) adopt a coiled-coil conformation. ATP is bound at residue 302–307 (GCGKTL). Residues 614–615 (YL) form a docks into pockets in the proteasome alpha-ring region.

The protein belongs to the AAA ATPase family. Homohexamer. Assembles into a hexameric ring structure that caps the 20S proteasome core. Strongly interacts with the prokaryotic ubiquitin-like protein Pup through a hydrophobic interface; the interacting region of ARC lies in its N-terminal coiled-coil domain. There is one Pup binding site per ARC hexamer ring. Upon ATP-binding, the C-terminus of ARC interacts with the alpha-rings of the proteasome core, possibly by binding to the intersubunit pockets.

It participates in protein degradation; proteasomal Pup-dependent pathway. In terms of biological role, ATPase which is responsible for recognizing, binding, unfolding and translocation of pupylated proteins into the bacterial 20S proteasome core particle. May be essential for opening the gate of the 20S proteasome via an interaction with its C-terminus, thereby allowing substrate entry and access to the site of proteolysis. Thus, the C-termini of the proteasomal ATPase may function like a 'key in a lock' to induce gate opening and therefore regulate proteolysis. The chain is Proteasome-associated ATPase from Mycolicibacterium gilvum (strain PYR-GCK) (Mycobacterium gilvum (strain PYR-GCK)).